Consider the following 90-residue polypeptide: Small ribosomal subunit protein mS37 (90 aa).

Cys27 and Cys58 are joined by a disulfide.

This sequence belongs to the mitochondrion-specific ribosomal protein mS37 family. Component of the mitochondrial small ribosomal subunit (mt-SSU). Mature N.crassa 74S mitochondrial ribosomes consist of a small (37S) and a large (54S) subunit. The 37S small subunit contains a 16S ribosomal RNA (16S mt-rRNA) and 32 different proteins. The 54S large subunit contains a 23S rRNA (23S mt-rRNA) and 42 different proteins.

The protein localises to the mitochondrion. Component of the mitochondrial ribosome (mitoribosome), a dedicated translation machinery responsible for the synthesis of mitochondrial genome-encoded proteins, including at least some of the essential transmembrane subunits of the mitochondrial respiratory chain. The mitoribosomes are attached to the mitochondrial inner membrane and translation products are cotranslationally integrated into the membrane. The sequence is that of Small ribosomal subunit protein mS37 (mrp10) from Neurospora crassa (strain ATCC 24698 / 74-OR23-1A / CBS 708.71 / DSM 1257 / FGSC 987).